The chain runs to 299 residues: Tetrahydromethanopterin S-methyltransferase subunit E (299 aa).

The next 6 membrane-spanning stretches (helical) occupy residues 57 to 79 (AISGEPVSYGLYVAVAGTIAWAL), 89 to 111 (AIIVGAGVAAIVHGAYSVSAFLG), 132 to 154 (HIGPIVGHGFIAVFTMTLAAYLA), 164 to 183 (LPLVSLIFGITVGAIGSSTG), 227 to 246 (FCSRFGGPLTGLCFGLIIFL), and 261 to 283 (LVTKTSIALLVGLLVVAVAAVIN).

The protein belongs to the MtrE family. In terms of assembly, the complex is composed of 8 subunits; MtrA, MtrB, MtrC, MtrD, MtrE, MtrF, MtrG and MtrH.

The protein resides in the cell membrane. It carries out the reaction 5-methyl-5,6,7,8-tetrahydromethanopterin + coenzyme M + 2 Na(+)(in) = 5,6,7,8-tetrahydromethanopterin + methyl-coenzyme M + 2 Na(+)(out). The protein operates within one-carbon metabolism; methanogenesis from CO(2); methyl-coenzyme M from 5,10-methylene-5,6,7,8-tetrahydromethanopterin: step 2/2. In terms of biological role, part of a complex that catalyzes the formation of methyl-coenzyme M and tetrahydromethanopterin from coenzyme M and methyl-tetrahydromethanopterin. This is an energy-conserving, sodium-ion translocating step. This chain is Tetrahydromethanopterin S-methyltransferase subunit E, found in Methanococcus maripaludis (strain DSM 14266 / JCM 13030 / NBRC 101832 / S2 / LL).